The primary structure comprises 352 residues: uncharacterized protein (352 aa).

Residues 1–21 (MNVDSRVFRFFLVFLILVVVA) form the signal peptide.

This sequence belongs to the bacterial solute-binding protein 1 family. WtpA subfamily.

This is an uncharacterized protein from Methanosarcina acetivorans (strain ATCC 35395 / DSM 2834 / JCM 12185 / C2A).